Here is a 132-residue protein sequence, read N- to C-terminus: Small ribosomal subunit protein uS8 (132 aa).

This sequence belongs to the universal ribosomal protein uS8 family. In terms of assembly, part of the 30S ribosomal subunit. Contacts proteins S5 and S12.

One of the primary rRNA binding proteins, it binds directly to 16S rRNA central domain where it helps coordinate assembly of the platform of the 30S subunit. This Shouchella clausii (strain KSM-K16) (Alkalihalobacillus clausii) protein is Small ribosomal subunit protein uS8.